Consider the following 74-residue polypeptide: Conotoxin Vc6.8 (74 aa).

An N-terminal signal peptide occupies residues 1 to 19; sequence MEKLTILLLVAAVLMSTQA. A propeptide spanning residues 20-34 is cleaved from the precursor; that stretch reads LMQEQRQKAKINLFS. Disulfide bonds link Cys-49-Cys-62, Cys-55-Cys-66, and Cys-61-Cys-70.

The protein belongs to the conotoxin O2 superfamily. As to expression, expressed by the venom duct.

The protein resides in the secreted. Inhibits voltage-gated ion channels. The chain is Conotoxin Vc6.8 from Conus victoriae (Queen Victoria cone).